The sequence spans 66 residues: Small vasohibin-binding protein (66 aa).

Residues 1–23 show a composition bias toward basic and acidic residues; the sequence is MDPPARKEKSKVKEPAFRVEKAK. The interval 1-30 is disordered; sequence MDPPARKEKSKVKEPAFRVEKAKQKSAQQE. Residues 5–52 adopt a coiled-coil conformation; it reads ARKEKSKVKEPAFRVEKAKQKSAQQELKQRQRAEIYALNRVMTELEQQ.

Belongs to the SVBP family. Interacts with VASH1 and VASH2. As to expression, highly expressed in bone marrow, spleen and testis.

Its subcellular location is the cytoplasm. It is found in the secreted. The protein localises to the cytoskeleton. In terms of biological role, enhances the tyrosine carboxypeptidase activity of VASH1 and VASH2, thereby promoting the removal of the C-terminal tyrosine residue of alpha-tubulin. Also required to enhance the solubility and secretion of VASH1 and VASH2. Plays a role in axon and excitatory synapse formation. The polypeptide is Small vasohibin-binding protein (Mus musculus (Mouse)).